Consider the following 201-residue polypeptide: Ribosomal RNA large subunit methyltransferase E (201 aa).

S-adenosyl-L-methionine-binding residues include Gly-49, Trp-51, Asp-69, Asp-87, and Asp-111. Catalysis depends on Lys-151, which acts as the Proton acceptor.

It belongs to the class I-like SAM-binding methyltransferase superfamily. RNA methyltransferase RlmE family.

It localises to the cytoplasm. The catalysed reaction is uridine(2552) in 23S rRNA + S-adenosyl-L-methionine = 2'-O-methyluridine(2552) in 23S rRNA + S-adenosyl-L-homocysteine + H(+). Functionally, specifically methylates the uridine in position 2552 of 23S rRNA at the 2'-O position of the ribose in the fully assembled 50S ribosomal subunit. The sequence is that of Ribosomal RNA large subunit methyltransferase E from Nitratidesulfovibrio vulgaris (strain DSM 19637 / Miyazaki F) (Desulfovibrio vulgaris).